The chain runs to 258 residues: UPF0246 protein YaaA (258 aa).

Belongs to the UPF0246 family.

This chain is UPF0246 protein YaaA, found in Escherichia coli (strain UTI89 / UPEC).